Reading from the N-terminus, the 556-residue chain is Man(5)GlcNAc(2)-PP-dolichol translocation protein RFT1 (556 aa).

12 helical membrane-spanning segments follow: residues 10–30 (LLGA…TFGI), 41–61 (EVLG…LFLS), 91–111 (LTVP…LNWL), 129–149 (VAFS…AQVF), 156–176 (ILLN…IVTG), 184–204 (AFAI…YGFF), 353–373 (SVLN…FTFG), 389–409 (FVAG…IYLL), 440–460 (VSFL…GFIF), 461–477 (ANCI…TYYI), 489–509 (LLGL…GIVC), and 517–537 (LATH…SWAL).

Belongs to the RFT1 family.

It is found in the endoplasmic reticulum membrane. It functions in the pathway protein modification; protein glycosylation. Intramembrane glycolipid transporter that operates in the biosynthetic pathway of dolichol-linked oligosaccharides, the glycan precursors employed in protein asparagine (N)-glycosylation. The sequential addition of sugars to dolichol pyrophosphate produces dolichol-linked oligosaccharides containing fourteen sugars, including two GlcNAcs, nine mannoses and three glucoses. Once assembled, the oligosaccharide is transferred from the lipid to nascent proteins by oligosaccharyltransferases. The assembly of dolichol-linked oligosaccharides begins on the cytosolic side of the endoplasmic reticulum membrane and finishes in its lumen. RFT1 could mediate the translocation of the cytosolically oriented intermediate DolPP-GlcNAc2Man5, produced by ALG11, into the ER lumen where dolichol-linked oligosaccharides assembly continues. However, the intramembrane lipid transporter activity could not be confirmed in vitro. This is Man(5)GlcNAc(2)-PP-dolichol translocation protein RFT1 from Drosophila melanogaster (Fruit fly).